A 543-amino-acid chain; its full sequence is Chaperonin GroEL (543 aa).

Residues Thr30–Pro33, Lys51, Asp87–Thr91, Gly415, Asp480–Ala482, and Asp496 each bind ATP.

It belongs to the chaperonin (HSP60) family. In terms of assembly, forms a cylinder of 14 subunits composed of two heptameric rings stacked back-to-back. Interacts with the co-chaperonin GroES.

It localises to the cytoplasm. The catalysed reaction is ATP + H2O + a folded polypeptide = ADP + phosphate + an unfolded polypeptide.. Together with its co-chaperonin GroES, plays an essential role in assisting protein folding. The GroEL-GroES system forms a nano-cage that allows encapsulation of the non-native substrate proteins and provides a physical environment optimized to promote and accelerate protein folding. This chain is Chaperonin GroEL, found in Hydrogenobaculum sp. (strain Y04AAS1).